The chain runs to 342 residues: MGNLFSRNKSPATELERVALSIDDLKKRLQTISSSNTNTLYYYYMSIVVILSIAMAHTWLRFEDPQKTYVACALMLGAIGIVLAGRYVINGFFSWRTNRTTQKLENAISQKTTLLDLVKETLKFKEAKEILDRYEKIEQNTTIDKNDSTLKSPSPIKKLTADSSMFATPKQEQKRVETPTAQGPNSAMNSMNMTPYHQRNRNAVPIRPFLRQTTAFDRVLDYFMSDGPNCRNALICSICHTHNGMSTPAEYPYISFRCFECGHLNPAKKMGPQIPLTRPPMGPKGIQHNGRVGPSENTHNMMENQKPSTDLTPSASQNGSEKGSDSENEKVPESKTMETEFH.

The Cytoplasmic portion of the chain corresponds to 1–39 (MGNLFSRNKSPATELERVALSIDDLKKRLQTISSSNTNT). A coiled-coil region spans residues 13–34 (TELERVALSIDDLKKRLQTISS). The chain crosses the membrane as a helical span at residues 40 to 60 (LYYYYMSIVVILSIAMAHTWL). Over 61–68 (RFEDPQKT) the chain is Lumenal. A helical transmembrane segment spans residues 69 to 89 (YVACALMLGAIGIVLAGRYVI). At 90–342 (NGFFSWRTNR…ESKTMETEFH (253 aa)) the chain is on the cytoplasmic side. Residues 102-136 (QKLENAISQKTTLLDLVKETLKFKEAKEILDRYEK) are a coiled coil. The interval 161-191 (ADSSMFATPKQEQKRVETPTAQGPNSAMNSM) is disordered. A compositionally biased stretch (polar residues) spans 179–191 (PTAQGPNSAMNSM). The segment at 236-261 (CSICHTHNGMSTPAEYPYISFRCFEC) adopts a C4-type; plays a role in ER morphology zinc-finger fold. Residues 278-342 (RPPMGPKGIQ…ESKTMETEFH (65 aa)) are disordered. The span at 295 to 321 (SENTHNMMENQKPSTDLTPSASQNGSE) shows a compositional bias: polar residues. A compositionally biased stretch (basic and acidic residues) spans 322-342 (KGSDSENEKVPESKTMETEFH).

This sequence belongs to the lunapark family. In terms of tissue distribution, expressed in cell bodies along the ventral cord around the pharynx and the tail both in larvae and adults. Also expressed in muscles and hypodermal cells.

It localises to the endoplasmic reticulum membrane. Functionally, plays a role in tubular endoplasmic reticulum network formation and maintenance. May be involved in central nervous system development. Has a presynaptic role in neurotransmission. Likely to operate in synaptogenesis by regulating vesicular transport or localization. Required for correct localization of rab-3 and snb-1. The protein is Endoplasmic reticulum junction formation protein lunapark-1 (lnp-1) of Caenorhabditis elegans.